The sequence spans 349 residues: Protein-glutamate methylesterase/protein-glutamine glutaminase (349 aa).

Residues 5 to 122 (RVLSVDDSAL…REGMLAYSEM (118 aa)) form the Response regulatory domain. Position 56 is a 4-aspartylphosphate (aspartate 56). Residues 152–344 (LLSSEKLIAI…QQMLATISAG (193 aa)) enclose the CheB-type methylesterase domain. Active-site residues include serine 164, histidine 190, and aspartate 286.

It belongs to the CheB family. Post-translationally, phosphorylated by CheA. Phosphorylation of the N-terminal regulatory domain activates the methylesterase activity.

The protein localises to the cytoplasm. It catalyses the reaction [protein]-L-glutamate 5-O-methyl ester + H2O = L-glutamyl-[protein] + methanol + H(+). The catalysed reaction is L-glutaminyl-[protein] + H2O = L-glutamyl-[protein] + NH4(+). In terms of biological role, involved in chemotaxis. Part of a chemotaxis signal transduction system that modulates chemotaxis in response to various stimuli. Catalyzes the demethylation of specific methylglutamate residues introduced into the chemoreceptors (methyl-accepting chemotaxis proteins or MCP) by CheR. Also mediates the irreversible deamidation of specific glutamine residues to glutamic acid. The sequence is that of Protein-glutamate methylesterase/protein-glutamine glutaminase from Shigella flexneri.